Consider the following 250-residue polypeptide: 2,3-bisphosphoglycerate-dependent phosphoglycerate mutase (250 aa).

Substrate-binding positions include 8–15, 21–22, Arg60, 87–90, Lys98, 114–115, and 183–184; these read RHGESKWN, TG, ERHY, RR, and GN. Residue His9 is the Tele-phosphohistidine intermediate of the active site. Glu87 (proton donor/acceptor) is an active-site residue.

Belongs to the phosphoglycerate mutase family. BPG-dependent PGAM subfamily.

The catalysed reaction is (2R)-2-phosphoglycerate = (2R)-3-phosphoglycerate. It functions in the pathway carbohydrate degradation; glycolysis; pyruvate from D-glyceraldehyde 3-phosphate: step 3/5. Its function is as follows. Catalyzes the interconversion of 2-phosphoglycerate and 3-phosphoglycerate. In Borrelia recurrentis (strain A1), this protein is 2,3-bisphosphoglycerate-dependent phosphoglycerate mutase.